The following is a 289-amino-acid chain: Lipoyl synthase 1 (289 aa).

Residues cysteine 33, cysteine 38, cysteine 44, cysteine 59, cysteine 63, cysteine 66, and serine 274 each contribute to the [4Fe-4S] cluster site. The Radical SAM core domain occupies 45–263 (FAGGTATFLI…RIGEEELGFL (219 aa)).

Belongs to the radical SAM superfamily. Lipoyl synthase family. Requires [4Fe-4S] cluster as cofactor.

The protein localises to the cytoplasm. It carries out the reaction [[Fe-S] cluster scaffold protein carrying a second [4Fe-4S](2+) cluster] + N(6)-octanoyl-L-lysyl-[protein] + 2 oxidized [2Fe-2S]-[ferredoxin] + 2 S-adenosyl-L-methionine + 4 H(+) = [[Fe-S] cluster scaffold protein] + N(6)-[(R)-dihydrolipoyl]-L-lysyl-[protein] + 4 Fe(3+) + 2 hydrogen sulfide + 2 5'-deoxyadenosine + 2 L-methionine + 2 reduced [2Fe-2S]-[ferredoxin]. It functions in the pathway protein modification; protein lipoylation via endogenous pathway; protein N(6)-(lipoyl)lysine from octanoyl-[acyl-carrier-protein]: step 2/2. Functionally, catalyzes the radical-mediated insertion of two sulfur atoms into the C-6 and C-8 positions of the octanoyl moiety bound to the lipoyl domains of lipoate-dependent enzymes, thereby converting the octanoylated domains into lipoylated derivatives. The chain is Lipoyl synthase 1 from Parasynechococcus marenigrum (strain WH8102).